Reading from the N-terminus, the 399-residue chain is Acetate kinase (399 aa).

Asn-10 is a Mg(2+) binding site. Lys-17 is an ATP binding site. A substrate-binding site is contributed by Arg-91. Residue Asp-148 is the Proton donor/acceptor of the active site. ATP contacts are provided by residues 208–212 (HLGNG), 283–285 (DCR), and 331–335 (GIGEN). Glu-385 is a binding site for Mg(2+).

It belongs to the acetokinase family. In terms of assembly, homodimer. It depends on Mg(2+) as a cofactor. Mn(2+) serves as cofactor.

The protein resides in the cytoplasm. The catalysed reaction is acetate + ATP = acetyl phosphate + ADP. It participates in metabolic intermediate biosynthesis; acetyl-CoA biosynthesis; acetyl-CoA from acetate: step 1/2. Functionally, catalyzes the formation of acetyl phosphate from acetate and ATP. Can also catalyze the reverse reaction. The sequence is that of Acetate kinase from Shewanella oneidensis (strain ATCC 700550 / JCM 31522 / CIP 106686 / LMG 19005 / NCIMB 14063 / MR-1).